Consider the following 258-residue polypeptide: Gene 3 protein (258 aa).

A compositionally biased stretch (polar residues) spans serine 163–histidine 176. The disordered stretch occupies residues serine 163–lysine 258. Residues serine 214–threonine 240 show a composition bias toward basic and acidic residues.

The sequence is that of Gene 3 protein from Equine herpesvirus 1 (strain Kentucky A) (EHV-1).